A 147-amino-acid polypeptide reads, in one-letter code: MTRKQKRLSVIVGGLAFLGAATGLTFYALGQKASYFYMPADLTTASVQPGQRIRLGGLVEKGTIQRGQGATVAFSVTDTHKSVKVTYTGILPDLFREEQGVITEGSFGPDGVFVADSVLAKHDERYMPKEVADGLKAKGVWQESKSE.

Residues 1 to 7 (MTRKQKR) are Cytoplasmic-facing. The helical; Signal-anchor for type II membrane protein transmembrane segment at 8–28 (LSVIVGGLAFLGAATGLTFYA) threads the bilayer. At 29-147 (LGQKASYFYM…KGVWQESKSE (119 aa)) the chain is on the periplasmic side. Positions 122 and 126 each coordinate heme.

It belongs to the CcmE/CycJ family.

It is found in the cell inner membrane. Functionally, heme chaperone required for the biogenesis of c-type cytochromes. Transiently binds heme delivered by CcmC and transfers the heme to apo-cytochromes in a process facilitated by CcmF and CcmH. The polypeptide is Cytochrome c-type biogenesis protein CcmE (Mesorhizobium japonicum (strain LMG 29417 / CECT 9101 / MAFF 303099) (Mesorhizobium loti (strain MAFF 303099))).